We begin with the raw amino-acid sequence, 289 residues long: MPQEQYTHHRSTMPGSVGPQVYKVGIYGWRKRCLYFFVLLLMILILVNLAMTIWILKVMNFTIDGMGNLRITEKGLKLEGDSEFLQPLYAKEIQSRPGNALYFKSARNVTVNILNDQTKVLTQLITGPKAVEAYGKKFEVKTVSGKLLFSADNNEVVVGAERLRVLGAEGTVFPKSIETPNVRADPFKELRLESPTRSLVMEAPKGVEINAEAGNMEATCRTELRLESKDGEIKLDAAKIRLPRLPHGSYTPTGTRQKVFEICVCANGRLFLSQAGAGSTCQINTSVCL.

At 1–35 the chain is on the cytoplasmic side; it reads MPQEQYTHHRSTMPGSVGPQVYKVGIYGWRKRCLY. The helical; Signal-anchor for type II membrane protein transmembrane segment at 36–56 threads the bilayer; that stretch reads FFVLLLMILILVNLAMTIWIL. The Extracellular segment spans residues 57-289; the sequence is KVMNFTIDGM…TCQINTSVCL (233 aa). 2 N-linked (GlcNAc...) asparagine glycosylation sites follow: Asn60 and Asn108. 2 disulfides stabilise this stretch: Cys263-Cys288 and Cys265-Cys281. Residue Asn284 is glycosylated (N-linked (GlcNAc...) asparagine).

This sequence belongs to the sarcoglycan beta/delta/gamma/zeta family. Interacts with FLNC and DAG1. Cross-link to form 2 major subcomplexes: one consisting of SGCB, SGCD and SGCG and the other consisting of SGCB and SGCD. The association between SGCB and SGCG is particularly strong while SGCA is loosely associated with the other sarcoglycans. Glycosylated. In terms of processing, disulfide bonds are present. As to expression, most strongly expressed in skeletal and cardiac muscle. Also detected in smooth muscle. Weak expression in brain and lung.

The protein localises to the cell membrane. The protein resides in the sarcolemma. Its subcellular location is the cytoplasm. It localises to the cytoskeleton. Its function is as follows. Component of the sarcoglycan complex, a subcomplex of the dystrophin-glycoprotein complex which forms a link between the F-actin cytoskeleton and the extracellular matrix. This chain is Delta-sarcoglycan (SGCD), found in Homo sapiens (Human).